Here is a 110-residue protein sequence, read N- to C-terminus: Early nodulin-12A (110 aa).

Residues 1 to 24 form the signal peptide; the sequence is MASFFLSSLVLFLAALILVPQGLA. Residues 31-110 are disordered; it reads VYEPPVNGPP…HPTEEHNIHF (80 aa). A compositionally biased stretch (pro residues) spans 32–43; the sequence is YEPPVNGPPVNK. A run of 3 repeats spans residues 34–38, 39–43, and 44–48. The tract at residues 34–88 is 11 X 5 AA approximate tandem repeats of P-P-[VQRH]-[NKH]-[GKE]; that stretch reads PPVNGPPVNKPPQKETPVHKPPQKETPVHKPPQKEPPRHKPPQKEPPRHKPPHKK. Positions 45–81 are enriched in basic and acidic residues; the sequence is PQKETPVHKPPQKETPVHKPPQKEPPRHKPPQKEPPR. A 4; approximate repeat occupies 49–53; that stretch reads TPVHK. Repeat 5 spans residues 54–58; the sequence is PPQKE. One copy of the 6; approximate repeat lies at 59 to 63; that stretch reads TPVHK. Repeat copies occupy residues 64–68, 69–73, 74–78, 79–83, and 84–88. Basic residues predominate over residues 82–93; that stretch reads HKPPHKKSHLHV. Over residues 101–110 the composition is skewed to basic and acidic residues; sequence HPTEEHNIHF.

Belongs to the plant proline-rich protein superfamily. ENOD12 family. In terms of tissue distribution, root nodules, stem and flower.

The protein resides in the secreted. Its subcellular location is the cell wall. Its function is as follows. Involved in the infection process during the plant-rhizobium interaction. The chain is Early nodulin-12A (ENOD12A) from Pisum sativum (Garden pea).